The following is a 197-amino-acid chain: Gastrula zinc finger protein XlCGF17.1 (197 aa).

7 C2H2-type zinc fingers span residues 6–28 (ISCSECGKCFIKSSELTVHQMTH), 34–56 (YSCSECGKCFASLSHLRVHQKIH), 62–84 (FSCSECGKCFLNRGSLVRHHRTH), 90–112 (FFCSECGKRFAASSDLRVHRRTH), 118–140 (FSCSECEKRFLNPWSLVRHYRTH), 146–169 (FSCSECGKCFARSSDLTVHRRRSH), and 175–197 (FSCSECGKCFTSSSELTVHLRTH).

It belongs to the krueppel C2H2-type zinc-finger protein family.

It is found in the nucleus. May be involved in transcriptional regulation. The polypeptide is Gastrula zinc finger protein XlCGF17.1 (Xenopus laevis (African clawed frog)).